The following is an 88-amino-acid chain: Small ribosomal subunit protein bS20 (88 aa).

Positions 1-27 are disordered; it reads MANSKSAKKRALQSEKRRQHNASRRSM.

Belongs to the bacterial ribosomal protein bS20 family.

Its function is as follows. Binds directly to 16S ribosomal RNA. The sequence is that of Small ribosomal subunit protein bS20 from Shewanella frigidimarina (strain NCIMB 400).